A 146-amino-acid polypeptide reads, in one-letter code: Ribonuclease H (146 aa).

Positions 1–143 constitute an RNase H type-1 domain; it reads MQKKIIVYTD…CDELARQAIK (143 aa). 4 residues coordinate Mg(2+): D10, E48, D70, and D135.

The protein belongs to the RNase H family. Monomer. It depends on Mg(2+) as a cofactor.

It localises to the cytoplasm. It catalyses the reaction Endonucleolytic cleavage to 5'-phosphomonoester.. Its function is as follows. Endonuclease that specifically degrades the RNA of RNA-DNA hybrids. The sequence is that of Ribonuclease H from Chlorobium phaeobacteroides (strain DSM 266 / SMG 266 / 2430).